Reading from the N-terminus, the 459-residue chain is Exodeoxyribonuclease 7 large subunit (459 aa).

This sequence belongs to the XseA family. In terms of assembly, heterooligomer composed of large and small subunits.

It is found in the cytoplasm. The catalysed reaction is Exonucleolytic cleavage in either 5'- to 3'- or 3'- to 5'-direction to yield nucleoside 5'-phosphates.. Bidirectionally degrades single-stranded DNA into large acid-insoluble oligonucleotides, which are then degraded further into small acid-soluble oligonucleotides. This is Exodeoxyribonuclease 7 large subunit from Pseudomonas syringae pv. tomato (strain ATCC BAA-871 / DC3000).